We begin with the raw amino-acid sequence, 130 residues long: B1 protein (130 aa).

The N-terminal stretch at 1-12 is a signal peptide; the sequence is LTSLILLVAVQA. 2 disulfide bridges follow: Cys-28/Cys-59 and Cys-99/Cys-116.

It belongs to the PBP/GOBP family. Post-translationally, N-glycosylated. In terms of tissue distribution, tubular accessory sex gland.

It is found in the secreted. In terms of biological role, may be a carrier protein for lipids. In Tenebrio molitor (Yellow mealworm beetle), this protein is B1 protein.